A 507-amino-acid chain; its full sequence is Chromosomal replication initiator protein DnaA (507 aa).

Residues 1–87 (MSVELWQQCV…IGSKRSSAPR (87 aa)) are domain I, interacts with DnaA modulators. The span at 85-110 (APRAAPNAPLAAAQVSQAQANAAPAS) shows a compositional bias: low complexity. The segment at 85–158 (APRAAPNAPL…QQAPVRAEQR (74 aa)) is disordered. Positions 87-170 (RAAPNAPLAA…QVEGALKHTS (84 aa)) are domain II. The span at 126–140 (QKTEEISEEPSRDSF) shows a compositional bias: basic and acidic residues. Residues 171–387 (YLNRTFTFEN…GALKRVIAHS (217 aa)) are domain III, AAA+ region. ATP-binding residues include G215, G217, K218, and T219. Positions 388–507 (HFMGRDITIE…YKNLLRTLTT (120 aa)) are domain IV, binds dsDNA.

The protein belongs to the DnaA family. As to quaternary structure, oligomerizes as a right-handed, spiral filament on DNA at oriC.

It localises to the cytoplasm. Plays an essential role in the initiation and regulation of chromosomal replication. ATP-DnaA binds to the origin of replication (oriC) to initiate formation of the DNA replication initiation complex once per cell cycle. Binds the DnaA box (a 9 base pair repeat at the origin) and separates the double-stranded (ds)DNA. Forms a right-handed helical filament on oriC DNA; dsDNA binds to the exterior of the filament while single-stranded (ss)DNA is stabiized in the filament's interior. The ATP-DnaA-oriC complex binds and stabilizes one strand of the AT-rich DNA unwinding element (DUE), permitting loading of DNA polymerase. After initiation quickly degrades to an ADP-DnaA complex that is not apt for DNA replication. Binds acidic phospholipids. This Pseudomonas fluorescens (strain Pf0-1) protein is Chromosomal replication initiator protein DnaA.